The chain runs to 842 residues: MVTVGNYCEAEGPLGPAWAQNGLSPCFFFTLVPSTLMALGALALVLVLPCRRRDVPSGTEELFWAADSRVAPYALQLFLATLQVALPLAGLAGRVGTARGVRLPGYLLLASMLGSLASACGLWLLVAERRQARQSLAMGVWMKFRHSSGLLLLWTVAFAAENLALVSWNSPQWWWARADLGQQVQFGLWVLRYVISGGLFILGLWAPGLRPQSYTLRVHEADQDVERNQAQSTDRTSTWRDLGRKLRLLSSYLWPRGSPALQFIVLICLGLMGLDRALNVLVPIFYRDIVNLLTSKAPWSSLAWTVTTYVFLKFLQGGGTGSTGFVSNLRTFLWIRVQQFTSRGVELRLFSHLHELSLRWHLGRRTGEVLRVVDRGTSSVTGLLSYLVFNIIPTLADIIIGIIYFSMFFNAWFGLIVFLCMSLYLFLTIVVTEWRAKFRRAMNTQENITRARAVDSLLNFETVKYYNAEGYEVERYREAIIKYQGLEWKSSASLVVLNQTQNLVIGLGLLAGSLLCAYFVSEQKLQVGDFVLFGTYITQLYMPLNWFGTYYRMIQTNFIDMENMFDLLKEETEVKDVPGAGPLRFHKGQIEFENVHFSYADGRETLQDVSFTVMPGQTVALVGPSGAGKSTILRLLFRFYDISSGCIRIDGQDISQVTQISLRSHIGVVPQDTVLFNDTIANNIRYGRIAAGDSEVEAAAQAAGIHDAILSFPEGYETQVGERGLKLSGGEKQRVAIARTILKAPDIILLDEATSALDTSNERAIQASLAKVCTNRTTIVVAHRLSTVVSADQILVIKDGCIIERGRHEALLSQGGVYAEMWQLQQKGQETVSEDSKPQDIA.

Over 1–26 (MVTVGNYCEAEGPLGPAWAQNGLSPC) the chain is Lumenal. Residues 1–205 (MVTVGNYCEA…SGGLFILGLW (205 aa)) are required for the lysosomal targeting. The required for ATPase activity stretch occupies residues 1-236 (MVTVGNYCEA…RNQAQSTDRT (236 aa)). Cysteine 8 and cysteine 26 are oxidised to a cystine. Residues 27 to 47 (FFFTLVPSTLMALGALALVLV) traverse the membrane as a helical segment. Topologically, residues 48–72 (LPCRRRDVPSGTEELFWAADSRVAP) are cytoplasmic. The helical transmembrane segment at 73-93 (YALQLFLATLQVALPLAGLAG) threads the bilayer. Topologically, residues 94–106 (RVGTARGVRLPGY) are lumenal. The chain crosses the membrane as a helical span at residues 107–127 (LLLASMLGSLASACGLWLLVA). Residues 128–147 (ERRQARQSLAMGVWMKFRHS) are Cytoplasmic-facing. Residues 148 to 168 (SGLLLLWTVAFAAENLALVSW) traverse the membrane as a helical segment. The Lumenal portion of the chain corresponds to 169 to 185 (NSPQWWWARADLGQQVQ). The helical transmembrane segment at 186 to 206 (FGLWVLRYVISGGLFILGLWA) threads the bilayer. Topologically, residues 207–263 (PGLRPQSYTLRVHEADQDVERNQAQSTDRTSTWRDLGRKLRLLSSYLWPRGSPALQF) are cytoplasmic. The helical transmembrane segment at 264 to 284 (IVLICLGLMGLDRALNVLVPI) threads the bilayer. An ABC transmembrane type-1 domain is found at 265 to 556 (VLICLGLMGL…FGTYYRMIQT (292 aa)). The Lumenal segment spans residues 285 to 305 (FYRDIVNLLTSKAPWSSLAWT). The chain crosses the membrane as a helical span at residues 306–326 (VTTYVFLKFLQGGGTGSTGFV). Residues 327-375 (SNLRTFLWIRVQQFTSRGVELRLFSHLHELSLRWHLGRRTGEVLRVVDR) are Cytoplasmic-facing. A helical membrane pass occupies residues 376–396 (GTSSVTGLLSYLVFNIIPTLA). Residue aspartate 397 is a topological domain, lumenal. The helical transmembrane segment at 398 to 418 (IIIGIIYFSMFFNAWFGLIVF) threads the bilayer. Topologically, residues 419–499 (LCMSLYLFLT…SSASLVVLNQ (81 aa)) are cytoplasmic. A helical transmembrane segment spans residues 500–520 (TQNLVIGLGLLAGSLLCAYFV). Over 521-529 (SEQKLQVGD) the chain is Lumenal. The helical transmembrane segment at 530–550 (FVLFGTYITQLYMPLNWFGTY) threads the bilayer. Topologically, residues 551–842 (YRMIQTNFID…SEDSKPQDIA (292 aa)) are cytoplasmic. Residues 590–824 (IEFENVHFSY…GGVYAEMWQL (235 aa)) form the ABC transporter domain. 623 to 630 (GPSGAGKS) lines the ATP pocket.

The protein belongs to the ABC transporter superfamily. ABCB family. Heavy Metal importer (TC 3.A.1.210) subfamily. In terms of assembly, homodimer. N-glycosylated. As to expression, highly expressed in the liver, adrenal glands, and testis.

It is found in the cell membrane. The protein resides in the mitochondrion outer membrane. Its subcellular location is the endoplasmic reticulum membrane. The protein localises to the golgi apparatus membrane. It localises to the endosome membrane. It is found in the lysosome membrane. The protein resides in the late endosome membrane. Its subcellular location is the early endosome membrane. The protein localises to the secreted. It localises to the extracellular exosome. It is found in the mitochondrion. The protein resides in the endosome. Its subcellular location is the multivesicular body membrane. The protein localises to the melanosome membrane. The catalysed reaction is heme b(in) + ATP + H2O = heme b(out) + ADP + phosphate + H(+). The enzyme catalyses coproporphyrin III(in) + ATP + H2O = coproporphyrin III(out) + ADP + phosphate + H(+). It catalyses the reaction pheophorbide a(in) + ATP + H2O = pheophorbide a(out) + ADP + phosphate + H(+). It carries out the reaction coproporphyrinogen III(in) + ATP + H2O = coproporphyrinogen III(out) + ADP + phosphate + H(+). The catalysed reaction is protoporphyrin IX(in) + ATP + H2O = protoporphyrin IX(out) + ADP + phosphate + H(+). The enzyme catalyses coproporphyrin I(in) + ATP + H2O = coproporphyrin I(out) + ADP + phosphate + H(+). It catalyses the reaction uroporphyrin I(in) + ATP + H2O = uroporphyrin I(out) + ADP + phosphate + H(+). It carries out the reaction uroporphyrin III(in) + ATP + H2O = uroporphyrin III(out) + ADP + phosphate + H(+). Functionally, ATP-dependent transporter that catalyzes the transport of a broad-spectrum of porphyrins from the cytoplasm to the extracellular space through the plasma membrane or into the vesicle lumen. May also function as an ATP-dependent importer of porphyrins from the cytoplasm into the mitochondria, in turn may participate in the de novo heme biosynthesis regulation and in the coordination of heme and iron homeostasis during phenylhydrazine stress. May also play a key role in the early steps of melanogenesis producing PMEL amyloid fibrils. In vitro, it confers to cells a resistance to toxic metal such as arsenic and cadmium and against chemotherapeutics agent such as 5-fluorouracil, SN-38 and vincristin. In addition may play a role in the transition metal homeostasis. The chain is ATP-binding cassette sub-family B member 6 from Mesocricetus auratus (Golden hamster).